We begin with the raw amino-acid sequence, 178 residues long: RNA pyrophosphohydrolase (178 aa).

Positions 18–171 constitute a Nudix hydrolase domain; it reads PYRPCVGLMV…KRKVYEQVVA (154 aa). The Nudix box signature appears at 59-80; it reads GGIDKGEDPAQAALRELYEETG.

This sequence belongs to the Nudix hydrolase family. RppH subfamily. A divalent metal cation serves as cofactor.

In terms of biological role, accelerates the degradation of transcripts by removing pyrophosphate from the 5'-end of triphosphorylated RNA, leading to a more labile monophosphorylated state that can stimulate subsequent ribonuclease cleavage. The chain is RNA pyrophosphohydrolase from Brucella canis (strain ATCC 23365 / NCTC 10854 / RM-666).